The primary structure comprises 238 residues: Sugar fermentation stimulation protein homolog (238 aa).

It belongs to the SfsA family.

This is Sugar fermentation stimulation protein homolog from Bartonella tribocorum (strain CIP 105476 / IBS 506).